A 462-amino-acid polypeptide reads, in one-letter code: MTVPQYIGPNRTGITVIIIGLGIGGLTAAISCHLQGHHVIGFDKLENLEPYGDGLILTPNGSQVLRDLDDTGAIAAWINTWAYNCRDCKIYNTDGVHVGQHPIPDTDKGLSLLPRGGLVQILYQTAKRLGLDLRLGVKINEFVEDVDQARVIIDGVHVQGDCIIFADGANSRGREAVSSCNVKPYYSGFSVYRGRADGAALIKDPQCHWLLSKEGAIDQATGFAGPEMYVQLATCGGGQASFCIGITQRFALQHTQSAENFWTTPIDKNEMLDKISYWKCINQIRPVIDKMAKDQFILCPLLRAGVLDSWVSPIGRIAVIGDAAHPFFPTSAQGAAQAIEDAATLAITLALAGKNNIRLGLKAMEAMRKHRATYIQRNAWRVNDAWFGSPVEERIGEKAAPAIGVIDWITEHCCRTYASNEFDRVQDSIATGQPYVPTNIPSQQFKEAAEWIANRNDEKEKN.

N10 carries an N-linked (GlcNAc...) asparagine glycan. Residues 14-34 (ITVIIIGLGIGGLTAAISCHL) form a helical membrane-spanning segment. D43 is a binding site for FAD. N-linked (GlcNAc...) asparagine glycosylation is present at N60. FAD is bound at residue R115. Residue R193 is part of the active site. D322 and A335 together coordinate FAD.

It belongs to the paxM FAD-dependent monooxygenase family. The cofactor is FAD.

Its subcellular location is the membrane. Its pathway is secondary metabolite biosynthesis. In terms of biological role, FAD-dependent monooxygenase; part of the gene cluster that mediates the biosynthesis of oxepinamides, derivatives of anthranilyl-containing tripeptides that share an oxepin ring and a fused pyrimidinone moiety. The nonribosomal peptide synthetase (NRPS) opaA assembles the quinazolinone core with D-Phe incorporation. The first adenylation domain (A1) of opaA loads and activates anthranilic acid whereas the second A domain (A2) is for activating of L-Phe, which is then converted to D-form by the E domain. The third A domain (A3) is responsible for L-Ile activation and the terminal condensation domain C3 for cyclization and releasing the NRPS product protuboxepin K. The cytochrome P450 monooxygenase opaB then catalyzes alone the oxepin ring formation to convert protuboxepin K into protuboxepin A. The flavoenzyme opaC installs subsequently one hydroxyl group at the oxepin ring, accompanied by double bond migration, to form 15-epi-oxepinamide E. The epimerase opaE changes the D-Phe residue back to L-form, leading to oxepinamide E, which is further methylated at the hydroxyl group at C-12 by the O-methyltransferase OpaF to yield oxepinamide F. This Aspergillus ustus protein is FAD-dependent monooxygenase opaC.